A 125-amino-acid polypeptide reads, in one-letter code: DNA-directed RNA polymerase II subunit RPB9 (125 aa).

M1 carries the post-translational modification N-acetylmethionine. Residues C17, C20, C39, C42, C86, C89, C114, and C119 each coordinate Zn(2+). Residues 17-42 (CQECNNMLYPKEDKENRILLYACRNC) form a C4-type zinc finger. The TFIIS-type zinc-finger motif lies at 82–124 (EDHPCQKCGHKEAVFFQSHSARAEDAMRLYYVCTAPHCGHRWT).

The protein belongs to the archaeal RpoM/eukaryotic RPA12/RPB9/RPC11 RNA polymerase family. In terms of assembly, component of the RNA polymerase II (Pol II) core complex consisting of 12 subunits: a ten-subunit catalytic core composed of POLR2A/RPB1, POLR2B/RPB2, POLR2C/RPB3, POLR2I/RPB9, POLR2J/RPB11, POLR2E/RPABC1, POLR2F/RPABC2, POLR2H/RPABC3, POLR2K/RPABC4 and POLR2L/RPABC5 and a mobile stalk composed of two subunits POLR2D/RPB4 and POLR2G/RPB7, protruding from the core and functioning primarily in transcription initiation. Part of Pol II(G) complex, in which Pol II core associates with an additional subunit POLR2M; unlike conventional Pol II, Pol II(G) functions as a transcriptional repressor. Part of TBP-based Pol II pre-initiation complex (PIC), in which Pol II core assembles with general transcription factors and other specific initiation factors including GTF2E1, GTF2E2, GTF2F1, GTF2F2, TCEA1, ERCC2, ERCC3, GTF2H2, GTF2H3, GTF2H4, GTF2H5, GTF2A1, GTF2A2, GTF2B and TBP; this large multi-subunit PIC complex mediates DNA unwinding and targets Pol II core to the transcription start site where the first phosphodiester bond forms.

Its subcellular location is the nucleus. The protein resides in the nucleolus. In terms of biological role, DNA-dependent RNA polymerase catalyzes the transcription of DNA into RNA using the four ribonucleoside triphosphates as substrates. Component of RNA polymerase II which synthesizes mRNA precursors and many functional non-coding RNAs. Pol II is the central component of the basal RNA polymerase II transcription machinery. It is composed of mobile elements that move relative to each other. POLR2I/RPB9 is part of the upper jaw surrounding the central large cleft and thought to grab the incoming DNA template. This is DNA-directed RNA polymerase II subunit RPB9 (POLR2I) from Bos taurus (Bovine).